We begin with the raw amino-acid sequence, 242 residues long: Probable transcriptional regulatory protein mhp472 (242 aa).

The protein belongs to the TACO1 family.

The protein resides in the cytoplasm. The chain is Probable transcriptional regulatory protein mhp472 from Mesomycoplasma hyopneumoniae (strain 232) (Mycoplasma hyopneumoniae).